Consider the following 201-residue polypeptide: Small ribosomal subunit protein uS4c (201 aa).

The interval 15–43 (LGALPGLTRKTPKSGSNQKKKFHSGKKEQ) is disordered. Positions 89–150 (MRLDNILFRL…NQRSKRLVQN (62 aa)) constitute an S4 RNA-binding domain.

This sequence belongs to the universal ribosomal protein uS4 family. As to quaternary structure, part of the 30S ribosomal subunit. Contacts protein S5. The interaction surface between S4 and S5 is involved in control of translational fidelity.

It localises to the plastid. The protein localises to the chloroplast. In terms of biological role, one of the primary rRNA binding proteins, it binds directly to 16S rRNA where it nucleates assembly of the body of the 30S subunit. Its function is as follows. With S5 and S12 plays an important role in translational accuracy. This chain is Small ribosomal subunit protein uS4c (rps4), found in Sorghum bicolor (Sorghum).